We begin with the raw amino-acid sequence, 400 residues long: Protein screw (400 aa).

Residues 1–16 (MLNVFFLTSLFYAASA) form the signal peptide. Positions 17–277 (TTYVTTNNHI…RFKRDLEKRR (261 aa)) are excised as a propeptide. Residues asparagine 165, asparagine 189, asparagine 201, asparagine 304, and asparagine 342 are each glycosylated (N-linked (GlcNAc...) asparagine). 3 cysteine pairs are disulfide-bonded: cysteine 300–cysteine 365, cysteine 329–cysteine 397, and cysteine 333–cysteine 399.

This sequence belongs to the TGF-beta family. As to quaternary structure, heterodimers of scw/dpp are the active subunit, dpp/dpp homodimers elicit a basal response and scw/scw homodimers alone are ineffective in specifying a dorsal pattern. In terms of tissue distribution, ubiquitously expressed during early stages of embryogenesis, but the effect on development appears graded and is restricted to the dorsal side of the embryo.

The protein localises to the secreted. Part of the signal that specifies dorsal cell fates in the embryo. Acts together with dpp. The polypeptide is Protein screw (scw) (Drosophila melanogaster (Fruit fly)).